The chain runs to 122 residues: MARIAGIDLPRGKRSDIALSYIYGVGRVTALKVLDAVGINWSRSIDDLSAEELNEVRKELEKNYKVEGELRREVSANIKRLMDIGCYRGLRHRKGLPVHGQRTHTNARTRKGPRKGAVGKKK.

The disordered stretch occupies residues 95-122 (GLPVHGQRTHTNARTRKGPRKGAVGKKK).

This sequence belongs to the universal ribosomal protein uS13 family. Part of the 30S ribosomal subunit. Forms a loose heterodimer with protein S19. Forms two bridges to the 50S subunit in the 70S ribosome.

Functionally, located at the top of the head of the 30S subunit, it contacts several helices of the 16S rRNA. In the 70S ribosome it contacts the 23S rRNA (bridge B1a) and protein L5 of the 50S subunit (bridge B1b), connecting the 2 subunits; these bridges are implicated in subunit movement. Contacts the tRNAs in the A and P-sites. This is Small ribosomal subunit protein uS13 from Lawsonia intracellularis (strain PHE/MN1-00).